Reading from the N-terminus, the 625-residue chain is Phosphomethylpyrimidine synthase (625 aa).

Residues asparagine 237, methionine 266, tyrosine 295, histidine 331, 351 to 353 (SRG), 392 to 395 (DGLR), and glutamate 431 each bind substrate. Residue histidine 435 coordinates Zn(2+). Tyrosine 458 lines the substrate pocket. Position 499 (histidine 499) interacts with Zn(2+). [4Fe-4S] cluster-binding residues include cysteine 579, cysteine 582, and cysteine 587.

This sequence belongs to the ThiC family. Homodimer. Requires [4Fe-4S] cluster as cofactor.

The catalysed reaction is 5-amino-1-(5-phospho-beta-D-ribosyl)imidazole + S-adenosyl-L-methionine = 4-amino-2-methyl-5-(phosphooxymethyl)pyrimidine + CO + 5'-deoxyadenosine + formate + L-methionine + 3 H(+). The protein operates within cofactor biosynthesis; thiamine diphosphate biosynthesis. Its function is as follows. Catalyzes the synthesis of the hydroxymethylpyrimidine phosphate (HMP-P) moiety of thiamine from aminoimidazole ribotide (AIR) in a radical S-adenosyl-L-methionine (SAM)-dependent reaction. The sequence is that of Phosphomethylpyrimidine synthase from Cupriavidus metallidurans (strain ATCC 43123 / DSM 2839 / NBRC 102507 / CH34) (Ralstonia metallidurans).